The chain runs to 143 residues: Large ribosomal subunit protein bL17 (143 aa).

Belongs to the bacterial ribosomal protein bL17 family. Part of the 50S ribosomal subunit. Contacts protein L32.

This is Large ribosomal subunit protein bL17 from Chelativorans sp. (strain BNC1).